A 121-amino-acid polypeptide reads, in one-letter code: Small ribosomal subunit protein uS13 (121 aa).

Positions Arg-93–Lys-121 are disordered.

The protein belongs to the universal ribosomal protein uS13 family. Part of the 30S ribosomal subunit. Forms a loose heterodimer with protein S19. Forms two bridges to the 50S subunit in the 70S ribosome.

Its function is as follows. Located at the top of the head of the 30S subunit, it contacts several helices of the 16S rRNA. In the 70S ribosome it contacts the 23S rRNA (bridge B1a) and protein L5 of the 50S subunit (bridge B1b), connecting the 2 subunits; these bridges are implicated in subunit movement. Contacts the tRNAs in the A and P-sites. The protein is Small ribosomal subunit protein uS13 of Acidovorax ebreus (strain TPSY) (Diaphorobacter sp. (strain TPSY)).